The primary structure comprises 444 residues: Homocysteine/cysteine synthase (444 aa).

Ser44 bears the Phosphoserine mark. Lys160 is covalently cross-linked (Glycyl lysine isopeptide (Lys-Gly) (interchain with G-Cter in ubiquitin)). Residue Lys209 is modified to N6-(pyridoxal phosphate)lysine.

Belongs to the trans-sulfuration enzymes family. In terms of assembly, homotetramer. Requires pyridoxal 5'-phosphate as cofactor.

It is found in the cytoplasm. The enzyme catalyses O-acetyl-L-homoserine + methanethiol = L-methionine + acetate + H(+). It catalyses the reaction O-acetyl-L-homoserine + hydrogen sulfide = L-homocysteine + acetate. The catalysed reaction is O-acetyl-L-serine + hydrogen sulfide = L-cysteine + acetate. The protein operates within amino-acid biosynthesis; L-methionine biosynthesis via de novo pathway; L-homocysteine from O-acetyl-L-homoserine. Catalyzes the conversion of O-acetyl-L-homoserine (OAH) into homocysteine in the methionine biosynthesis pathway. Required to efficiently reduce toxic levels of hydrogen sulfide generated when the sulfate assimilation pathway (SAP) is active. Also catalyzes the conversion of O-acetylserine (OAS) into cysteine, the last step in the cysteine biosynthesis pathway. However, it seems that in S.cerevisiae cysteine biosynthesis occurs exclusively through the cystathionine pathway and not via direct incorporation of sulfur into OAS. It therefore has no metabolic role in cysteine biosynthesis and may only have a regulatory role controlling OAS levels. This is Homocysteine/cysteine synthase from Saccharomyces cerevisiae (strain ATCC 204508 / S288c) (Baker's yeast).